A 335-amino-acid chain; its full sequence is DNA-directed RNA polymerase subunit alpha (335 aa).

Residues 1-233 (MVREKIRVST…DLLIPFLHAE (233 aa)) form an alpha N-terminal domain (alpha-NTD) region. Positions 263–335 (KKKIALKFIF…HFVIDLKNKR (73 aa)) are alpha C-terminal domain (alpha-CTD).

This sequence belongs to the RNA polymerase alpha chain family. In terms of assembly, in plastids the minimal PEP RNA polymerase catalytic core is composed of four subunits: alpha, beta, beta', and beta''. When a (nuclear-encoded) sigma factor is associated with the core the holoenzyme is formed, which can initiate transcription.

Its subcellular location is the plastid. It is found in the chloroplast. The enzyme catalyses RNA(n) + a ribonucleoside 5'-triphosphate = RNA(n+1) + diphosphate. In terms of biological role, DNA-dependent RNA polymerase catalyzes the transcription of DNA into RNA using the four ribonucleoside triphosphates as substrates. The chain is DNA-directed RNA polymerase subunit alpha from Spinacia oleracea (Spinach).